A 73-amino-acid chain; its full sequence is Small ribosomal subunit protein uS15c (73 aa).

Belongs to the universal ribosomal protein uS15 family. As to quaternary structure, part of the 30S ribosomal subunit.

It is found in the plastid. Its subcellular location is the chloroplast. This Welwitschia mirabilis (Tree tumbo) protein is Small ribosomal subunit protein uS15c (rps15).